Here is a 277-residue protein sequence, read N- to C-terminus: Putative phosphoenolpyruvate synthase regulatory protein (277 aa).

ADP is bound at residue 157–164; it reads GVSRSGKT.

This sequence belongs to the pyruvate, phosphate/water dikinase regulatory protein family. PSRP subfamily.

It catalyses the reaction [pyruvate, water dikinase] + ADP = [pyruvate, water dikinase]-phosphate + AMP + H(+). It carries out the reaction [pyruvate, water dikinase]-phosphate + phosphate + H(+) = [pyruvate, water dikinase] + diphosphate. Bifunctional serine/threonine kinase and phosphorylase involved in the regulation of the phosphoenolpyruvate synthase (PEPS) by catalyzing its phosphorylation/dephosphorylation. This is Putative phosphoenolpyruvate synthase regulatory protein from Vibrio atlanticus (strain LGP32) (Vibrio splendidus (strain Mel32)).